The sequence spans 1194 residues: DNA polymerase catalytic subunit (1194 aa).

The protein belongs to the DNA polymerase type-B family. As to quaternary structure, forms a complex with the ssDNA-binding protein, the DNA polymerase processivity factor, and the alkaline exonuclease. Interacts with the helicase-primase complex composed of the primase, the helicase and the primase-associated factor; this interaction may coordinate leading and lagging strand DNA synthesis at the replication fork.

It is found in the host nucleus. The enzyme catalyses DNA(n) + a 2'-deoxyribonucleoside 5'-triphosphate = DNA(n+1) + diphosphate. It catalyses the reaction Endonucleolytic cleavage to 5'-phosphomonoester.. Functionally, replicates viral genomic DNA. The replication complex is composed of six viral proteins: the DNA polymerase, processivity factor, primase, primase-associated factor, helicase, and ssDNA-binding protein. Additionally, the polymerase contains an intrinsic ribonuclease H (RNase H) activity that specifically degrades RNA/DNA heteroduplexes or duplex DNA substrates in the 5' to 3' direction. Therefore, it can catalyze the excision of the RNA primers that initiate the synthesis of Okazaki fragments at a replication fork during viral DNA replication. The polypeptide is DNA polymerase catalytic subunit (Varicella-zoster virus (strain Oka vaccine) (HHV-3)).